We begin with the raw amino-acid sequence, 416 residues long: LysM domain-containing GPI-anchored protein 1 (416 aa).

Residues 1–27 (MKIPEKPIFLIFVSLILASSLTFTATA) form the signal peptide. Cystine bridges form between Cys34-Cys100, Cys40-Cys163, Cys98-Cys161, and Cys100-Cys163. A glycan (N-linked (GlcNAc...) asparagine) is linked at Asn37. The region spanning 110–157 (THYKTRPSDNLGSIADSVYGGLVSAEQIQEANSVNDPSLLDVGTSLVI) is the LysM 1 domain. Asn165 is a glycosylation site (N-linked (GlcNAc...) asparagine). Residues 176-219 (LSYVVKEIDTLVGIARRYSTTITDLMNVNAMGAPDVSSGDILAV) form the LysM 2 domain. 2 cysteine pairs are disulfide-bonded: Cys224-Cys256 and Cys251-Cys279. A glycan (N-linked (GlcNAc...) asparagine) is linked at Asn241. 3 N-linked (GlcNAc...) asparagine glycosylation sites follow: Asn288, Asn299, and Asn310. The tract at residues 356–376 (DGPGSIASSPRSSMLPGGGIL) is disordered. Residue Ala391 is the site of GPI-anchor amidated alanine attachment. Residues 392 to 416 (SASSVSYFFITFLISIASFSLALSS) constitute a propeptide, removed in mature form.

In terms of assembly, interacts with peptidoglycans.

The protein localises to the cell membrane. It is found in the secreted. Required as a cell surface receptor for peptidoglycan (PGN) elicitor signaling leading to innate immunity. Plays an essential role in detecting PGNs and restricting bacterial growth (of Pseudomonas syringae pv. tomato DC3000 for example). In Arabidopsis thaliana (Mouse-ear cress), this protein is LysM domain-containing GPI-anchored protein 1 (LYM1).